Consider the following 326-residue polypeptide: tRNA-modifying protein YgfZ (326 aa).

Folate-binding residues include W27 and W189.

The protein belongs to the tRNA-modifying YgfZ family.

Its subcellular location is the cytoplasm. Folate-binding protein involved in regulating the level of ATP-DnaA and in the modification of some tRNAs. It is probably a key factor in regulatory networks that act via tRNA modification, such as initiation of chromosomal replication. The polypeptide is tRNA-modifying protein YgfZ (Salmonella schwarzengrund (strain CVM19633)).